The chain runs to 81 residues: MDPTIAAGALIGGGLIMAGGAIGAGIGDGVAGNALISGVARQPEAQGRLFTPFFITVGLVEAAYFINLAFMALFVFATPVK.

The next 2 membrane-spanning stretches (helical) occupy residues 5–25 (IAAG…IGAG) and 57–77 (VGLV…FVFA).

It belongs to the ATPase C chain family. F-type ATPases have 2 components, F(1) - the catalytic core - and F(0) - the membrane proton channel. F(1) has five subunits: alpha(3), beta(3), gamma(1), delta(1), epsilon(1). F(0) has three main subunits: a(1), b(2) and c(10-14). The alpha and beta chains form an alternating ring which encloses part of the gamma chain. F(1) is attached to F(0) by a central stalk formed by the gamma and epsilon chains, while a peripheral stalk is formed by the delta and b chains.

It localises to the cell membrane. F(1)F(0) ATP synthase produces ATP from ADP in the presence of a proton or sodium gradient. F-type ATPases consist of two structural domains, F(1) containing the extramembraneous catalytic core and F(0) containing the membrane proton channel, linked together by a central stalk and a peripheral stalk. During catalysis, ATP synthesis in the catalytic domain of F(1) is coupled via a rotary mechanism of the central stalk subunits to proton translocation. Its function is as follows. Key component of the F(0) channel; it plays a direct role in translocation across the membrane. A homomeric c-ring of between 10-14 subunits forms the central stalk rotor element with the F(1) delta and epsilon subunits. This is ATP synthase subunit c from Mycobacterium bovis (strain ATCC BAA-935 / AF2122/97).